The primary structure comprises 423 residues: G protein-activated inward rectifier potassium channel 2 (423 aa).

Topologically, residues 1 to 89 are cytoplasmic; it reads MAKLTESMTN…IFTTLVDLKW (89 aa). A phosphoserine mark is found at Ser16 and Ser23. Residues 90 to 114 traverse the membrane as a helical segment; the sequence is RFNLLIFVMVYTVTWLFFGMIWWLI. The Extracellular portion of the chain corresponds to 115–138; the sequence is AYIRGDMDHIEDPSWTPCVTNLNG. The segment at residues 139-150 is an intramembrane region (helical; Pore-forming); sequence FVSAFLFSIETE. Residues 151 to 157 constitute an intramembrane region (pore-forming); the sequence is TTIGYGY. Positions 152 to 157 match the Selectivity filter motif; it reads TIGYGY. At 158 to 166 the chain is on the extracellular side; that stretch reads RVITDKCPE. Residues 167-188 traverse the membrane as a helical segment; sequence GIILLLIQSVLGSIVNAFMVGC. Residues 189-423 are Cytoplasmic-facing; that stretch reads MFVKISQPKK…VANLENESKV (235 aa). Positions 390 to 423 are disordered; it reads NQHAELETEEEEKNLEEQTERNGDVANLENESKV. The short motif at 420–423 is the PDZ-binding element; that stretch reads ESKV.

Belongs to the inward rectifier-type potassium channel (TC 1.A.2.1) family. KCNJ6 subfamily. In terms of assembly, associates with KCNJ3/GIRK1 or KCNJ5/GRIK4 to form a G-protein-activated heteromultimer pore-forming unit. The resulting inward current is much larger. Interacts (via PDZ-binding motif) with SNX27 (via PDZ domain); the interaction is required when endocytosed to prevent degradation in lysosomes and promote recycling to the plasma membrane. In terms of tissue distribution, most abundant in cerebellum, and to a lesser degree in islets and exocrine pancreas.

The protein resides in the membrane. It carries out the reaction K(+)(in) = K(+)(out). Its activity is regulated as follows. Activated by phosphatidylinositol 4,5 biphosphate (PtdIns(4,5)P2). Inward rectifier potassium channels are characterized by a greater tendency to allow potassium to flow into the cell rather than out of it. Their voltage dependence is regulated by the concentration of extracellular potassium; as external potassium is raised, the voltage range of the channel opening shifts to more positive voltages. The inward rectification is mainly due to the blockage of outward current by internal magnesium. This potassium channel may be involved in the regulation of insulin secretion by glucose and/or neurotransmitters acting through G-protein-coupled receptors. This Homo sapiens (Human) protein is G protein-activated inward rectifier potassium channel 2 (KCNJ6).